Here is a 161-residue protein sequence, read N- to C-terminus: Nucleotide-binding protein Gura_0717 (161 aa).

The protein belongs to the YajQ family.

Functionally, nucleotide-binding protein. In Geotalea uraniireducens (strain Rf4) (Geobacter uraniireducens), this protein is Nucleotide-binding protein Gura_0717.